We begin with the raw amino-acid sequence, 202 residues long: Response regulator RamR (202 aa).

The tract at residues 1–121 (MGEMVRIAVV…LITAVHTVAR (121 aa)) is response regulatory. The HTH luxR-type domain occupies 135–200 (LKGAEMPLTT…DAIRIVQSAG (66 aa)). The H-T-H motif DNA-binding region spans 159–178 (IAEIAARLHLSRGTVRNYMA).

In terms of assembly, homodimer, in the absence of phosphorylation. Post-translationally, may be phosphorylated by an unknown kinase, probably on Asp-56.

Functionally, a transcription factor required for aerial hyphae formation on rich medium. Activates transcription of ramC. Might be part of a two-component regulatory system. Binds the promoter of ramC. Non-phosphorylated protein cooperatively binds multiple sites in the ramC promoter. Has not been seen to autophosphorylate using the small molecule phosphodonors phosphoramidate, acetyl phosphate or carbamoyl phosphate. Upon low expression suppresses the bald (bld, no aerial hyphae) phenotype of citA but not bldJ mutants; higher expression also suppresses the bldJ mutant as well as several other bld mutations, inducing SapB production even on media where SapB is normally not produced. Expression of the ram locus (ramA, ramB and ramR) induces rapid aerial mycelium formation in S.lividans. Overexpression suppresses the no aerial hyphae phenotype of a chaplin-negative strain, probably by inducing expression of SapB. Overexpression of RamR show there are about 280 genes having at least a threefold increase or fourfold decrease in RNA abundance versus wild-type including gene cluster SCO4072-SCO4075. This Streptomyces coelicolor (strain ATCC BAA-471 / A3(2) / M145) protein is Response regulator RamR.